The primary structure comprises 153 residues: Ribosomal RNA large subunit methyltransferase H (153 aa).

S-adenosyl-L-methionine contacts are provided by residues leucine 71, glycine 102, and 121-126 (LSRMTL).

Belongs to the RNA methyltransferase RlmH family. Homodimer.

The protein localises to the cytoplasm. It catalyses the reaction pseudouridine(1915) in 23S rRNA + S-adenosyl-L-methionine = N(3)-methylpseudouridine(1915) in 23S rRNA + S-adenosyl-L-homocysteine + H(+). In terms of biological role, specifically methylates the pseudouridine at position 1915 (m3Psi1915) in 23S rRNA. The polypeptide is Ribosomal RNA large subunit methyltransferase H (Anaeromyxobacter sp. (strain Fw109-5)).